Reading from the N-terminus, the 243-residue chain is ATP synthase subunit a, chloroplastic (243 aa).

Transmembrane regions (helical) follow at residues 32–52, 91–111, 130–150, 195–215, and 216–236; these read AQVLITSWFVLGLLLGIALIA, IPFVGTLFLFIFVSNWSGALI, INTTVALALLTSVAYFYAGLN, LVVAVLVSLVPLVIPVPMMFL, and GLFTSGIQALIFATLAGAYIG.

It belongs to the ATPase A chain family. As to quaternary structure, F-type ATPases have 2 components, CF(1) - the catalytic core - and CF(0) - the membrane proton channel. CF(1) has five subunits: alpha(3), beta(3), gamma(1), delta(1), epsilon(1). CF(0) has four main subunits: a, b, b' and c.

It localises to the plastid. Its subcellular location is the chloroplast thylakoid membrane. Functionally, key component of the proton channel; it plays a direct role in the translocation of protons across the membrane. This chain is ATP synthase subunit a, chloroplastic, found in Chaetosphaeridium globosum (Charophycean green alga).